The chain runs to 251 residues: Probable transcriptional regulatory protein Francci3_1368 (251 aa).

It belongs to the TACO1 family.

The protein resides in the cytoplasm. The chain is Probable transcriptional regulatory protein Francci3_1368 from Frankia casuarinae (strain DSM 45818 / CECT 9043 / HFP020203 / CcI3).